Here is a 275-residue protein sequence, read N- to C-terminus: Caspase-3 (275 aa).

Methionine 1 is modified (N-acetylmethionine). Propeptides lie at residues 1–9 and 10–28; these read MENTENSVD and SKSIKTSETKILHGSKSMD. At lysine 11 the chain carries N6-acetyllysine. The residue at position 26 (serine 26) is a Phosphoserine. Residues histidine 121 and cysteine 163 contribute to the active site. Cysteine 163 carries the post-translational modification S-nitrosocysteine; in inhibited form.

Belongs to the peptidase C14A family. As to quaternary structure, heterotetramer that consists of two anti-parallel arranged heterodimers, each one formed by a 17 kDa (p17) and a 12 kDa (p12) subunit. Interacts with BIRC6/bruce. In terms of processing, cleavage by granzyme B, caspase-6, caspase-8 and caspase-10 generates the two active subunits. Additional processing of the propeptides is likely due to the autocatalytic activity of the activated protease. Active heterodimers between the small subunit of caspase-7 protease and the large subunit of caspase-3 also occur and vice versa. Post-translationally, S-nitrosylated on its catalytic site cysteine in unstimulated cell lines and denitrosylated upon activation of the Fas apoptotic pathway, associated with an increase in intracellular caspase activity. Fas therefore activates caspase-3 not only by inducing the cleavage of the caspase zymogen to its active subunits, but also by stimulating the denitrosylation of its active site thiol. Ubiquitinated by BIRC6; this activity is inhibited by DIABLO/SMAC.

It localises to the cytoplasm. It carries out the reaction Strict requirement for an Asp residue at positions P1 and P4. It has a preferred cleavage sequence of Asp-Xaa-Xaa-Asp-|- with a hydrophobic amino-acid residue at P2 and a hydrophilic amino-acid residue at P3, although Val or Ala are also accepted at this position.. With respect to regulation, inhibited by BIRC6; following inhibition of BIRC6-caspase binding by DIABLO/SMAC, BIRC6 is subjected to caspase cleavage, leading to an increase in active caspases. Involved in the activation cascade of caspases responsible for apoptosis execution. At the onset of apoptosis, it proteolytically cleaves poly(ADP-ribose) polymerase PARP1 at a '216-Asp-|-Gly-217' bond. Cleaves and activates sterol regulatory element binding proteins (SREBPs) between the basic helix-loop-helix leucine zipper domain and the membrane attachment domain. Cleaves and activates caspase-6, -7 and -9 (CASP6, CASP7 and CASP9, respectively). Cleaves and inactivates interleukin-18 (IL18). Triggers cell adhesion in sympathetic neurons through RET cleavage. Cleaves IL-1 beta between an Asp and an Ala, releasing the mature cytokine which is involved in a variety of inflammatory processes. Cleaves and inhibits serine/threonine-protein kinase AKT1 in response to oxidative stress. Acts as an inhibitor of type I interferon production during virus-induced apoptosis by mediating cleavage of antiviral proteins CGAS, IRF3 and MAVS, thereby preventing cytokine overproduction. Also involved in pyroptosis by mediating cleavage and activation of gasdermin-E (GSDME). Cleaves XRCC4 and phospholipid scramblase proteins XKR4, XKR8 and XKR9, leading to promote phosphatidylserine exposure on apoptotic cell surface. Cleaves BIRC6 following inhibition of BIRC6-caspase binding by DIABLO/SMAC. This chain is Caspase-3 (CASP3), found in Bos taurus (Bovine).